A 354-amino-acid polypeptide reads, in one-letter code: Probable cinnamyl alcohol dehydrogenase 5 (354 aa).

C43 is a binding site for Zn(2+). Residue S45 coordinates NADP(+). The Zn(2+) site is built by H65, E66, C96, C99, C102, C110, and C159. NADP(+) is bound by residues T163, 184–189, 207–212, T247, G271, and 294–296; these read GLGGLG, SSSPGK, and SCI.

The protein belongs to the zinc-containing alcohol dehydrogenase family. As to quaternary structure, homodimer. Requires Zn(2+) as cofactor.

It carries out the reaction (E)-cinnamyl alcohol + NADP(+) = (E)-cinnamaldehyde + NADPH + H(+). The enzyme catalyses (E)-coniferol + NADP(+) = (E)-coniferaldehyde + NADPH + H(+). It catalyses the reaction (E)-sinapyl alcohol + NADP(+) = (E)-sinapaldehyde + NADPH + H(+). The catalysed reaction is (E)-4-coumaroyl alcohol + NADP(+) = (E)-4-coumaraldehyde + NADPH + H(+). It carries out the reaction (E)-caffeyl alcohol + NADP(+) = (E)-caffeyl aldehyde + NADPH + H(+). Its pathway is aromatic compound metabolism; phenylpropanoid biosynthesis. Involved in lignin biosynthesis. Catalyzes the final step specific for the production of lignin monomers. Catalyzes the NADPH-dependent reduction of coniferaldehyde, 5-hydroxyconiferaldehyde, sinapaldehyde, 4-coumaraldehyde and caffeyl aldehyde to their respective alcohols. This chain is Probable cinnamyl alcohol dehydrogenase 5, found in Oryza sativa subsp. japonica (Rice).